A 64-amino-acid chain; its full sequence is Conotoxin Tx3.5-a (64 aa).

An N-terminal signal peptide occupies residues 1–19 (MSKLGVLLTICLLLFPLTA). Residues 20–47 (LPLDGDQPADQAAERMQAEQHPLFDQKR) constitute a propeptide that is removed on maturation. 3 cysteine pairs are disulfide-bonded: cysteine 49/cysteine 58, cysteine 50/cysteine 62, and cysteine 54/cysteine 63. Cysteine 63 bears the Cysteine amide mark.

It belongs to the conotoxin M superfamily. In terms of processing, contains 3 disulfide bonds. Post-translationally, two peptides are produced from this precursor. Conotoxin Tx3.5-b is amidated at Cys-63, conotoxin Tx3.5-a has an unmodified C-terminus. As to expression, expressed by the venom duct. Is present in all duct parts with a highest content in part 2 (proximal of the venom bulb) and then decreases in concentration toward the end of the duct.

The protein resides in the secreted. The chain is Conotoxin Tx3.5-a from Conus textile (Cloth-of-gold cone).